A 337-amino-acid polypeptide reads, in one-letter code: Heme A synthase (337 aa).

The next 5 helical transmembrane spans lie at 6–26 (ITKW…IGGI), 87–107 (FIHR…LIYF), 119–139 (LPYI…WYMV), 154–174 (LAFH…QLIK), and 192–212 (LIFS…GALV). Heme is bound at residue H256. The next 3 membrane-spanning stretches (helical) occupy residues 258 to 278 (LVGY…LKIE), 285 to 305 (IAYF…LTLL), and 308 to 328 (VPII…SIII). H316 is a binding site for heme.

It belongs to the COX15/CtaA family. Type 2 subfamily. In terms of assembly, interacts with CtaB. Heme b is required as a cofactor.

The protein resides in the cell membrane. The enzyme catalyses Fe(II)-heme o + 2 A + H2O = Fe(II)-heme a + 2 AH2. It participates in porphyrin-containing compound metabolism; heme A biosynthesis; heme A from heme O: step 1/1. Catalyzes the conversion of heme O to heme A by two successive hydroxylations of the methyl group at C8. The first hydroxylation forms heme I, the second hydroxylation results in an unstable dihydroxymethyl group, which spontaneously dehydrates, resulting in the formyl group of heme A. The chain is Heme A synthase from Rickettsia conorii (strain ATCC VR-613 / Malish 7).